The sequence spans 648 residues: MEHIQGAWKTISNGFGFKDAVFDGSSCISPTIVQQFGYQRRASDDGKLTDPSKTSNTIRVFLPNKQRTVVNVRNGMSLHDCLMKALKVRGLQPECCAVFRLLHEHKGKKARLDWNTDAASLIGEELQVDFLDHVPLTTHNFARKTFLKLAFCDICQKFLLNGFRCQTCGYKFHEHCSTKVPTMCVDWSNIRQLLLFPNSTIGDSGVPALPSLTMRRMRESVSRMPVSSQHRYSTPHAFTFNTSSPSSEGSLSQRQRSTSTPNVHMVSTTLPVDSRMIEDAIRSHSESASPSALSSSPNNLSPTGWSQPKTPVPAQRERAPVSGTQEKNKIRPRGQRDSSYYWEIEASEVMLSTRIGSGSFGTVYKGKWHGDVAVKILKVVDPTPEQFQAFRNEVAVLRKTRHVNILLFMGYMTKDNLAIVTQWCEGSSLYKHLHVQETKFQMFQLIDIARQTAQGMDYLHAKNIIHRDMKSNNIFLHEGLTVKIGDFGLATVKSRWSGSQQVEQPTGSVLWMAPEVIRMQDNNPFSFQSDVYSYGIVLYELMTGELPYSHINNRDQIIFMVGRGYASPDLSKLYKNCPKAMKRLVADCVKKVKEERPLFPQILSSIELLQHSLPKINRSASEPSLHRAAHTEDINACTLTTSPRLPVF.

Ser-29 bears the Phosphoserine; by MAPK1 mark. Ser-43 is subject to Phosphoserine; by PKA and MAPK1. Residues 56–131 form the RBD domain; it reads NTIRVFLPNK…IGEELQVDFL (76 aa). A Phorbol-ester/DAG-type zinc finger spans residues 138 to 184; it reads THNFARKTFLKLAFCDICQKFLLNGFRCQTCGYKFHEHCSTKVPTMC. Zn(2+) is bound by residues His-139, Cys-152, Cys-155, Cys-165, Cys-168, His-173, Cys-176, and Cys-184. Positions 220–334 are disordered; sequence SVSRMPVSSQ…QEKNKIRPRG (115 aa). Positions 239 to 271 are enriched in polar residues; the sequence is TFNTSSPSSEGSLSQRQRSTSTPNVHMVSTTLP. Ser-252 bears the Phosphoserine mark. The residue at position 259 (Ser-259) is a Phosphoserine; by PKA, PKC and PKB/AKT1. Thr-268 is modified (phosphothreonine; by autocatalysis). Thr-269 carries the post-translational modification Phosphothreonine; by PKA. The segment covering 275–285 has biased composition (basic and acidic residues); the sequence is RMIEDAIRSHS. Positions 286–301 are enriched in low complexity; it reads ESASPSALSSSPNNLS. Ser-289 is modified (phosphoserine; by MAPK1). Ser-296 is subject to Phosphoserine. At Ser-301 the chain carries Phosphoserine; by MAPK1. Positions 331–349 are interaction with PEBP1/RKIP; that stretch reads RPRGQRDSSYYWEIEASEV. Residue Ser-338 is modified to Phosphoserine; by PAK1, PAK2, PAK3 and PAK5. Ser-339 is subject to Phosphoserine; by PAK1, PAK2 and PAK3. Tyr-340 and Tyr-341 each carry phosphotyrosine; by SRC. The 261-residue stretch at 349–609 folds into the Protein kinase domain; it reads VMLSTRIGSG…PQILSSIELL (261 aa). ATP-binding positions include 355 to 363 and Lys-375; that span reads IGSGSFGTV. Asp-468 (proton acceptor) is an active-site residue. At Ser-471 the chain carries Phosphoserine. Thr-491 carries the post-translational modification Phosphothreonine. Phosphoserine is present on Ser-494. The residue at position 499 (Ser-499) is a Phosphoserine; by PKC. Arg-563 is modified (symmetric dimethylarginine; by PRMT5). Ser-621 is subject to Phosphoserine. Phosphoserine; by MAPK1 is present on Ser-642.

It belongs to the protein kinase superfamily. TKL Ser/Thr protein kinase family. RAF subfamily. In terms of assembly, monomer. Homodimer. Heterodimerizes with BRAF and this heterodimer possesses a highly increased kinase activity compared to the respective homodimers or monomers. Heterodimerization is mitogen-regulated and enhanced by 14-3-3 proteins. MAPK1/ERK2 activation can induce a negative feedback that promotes the dissociation of the heterodimer. Forms a multiprotein complex with Ras (M-Ras/MRAS), SHOC2 and protein phosphatase 1 (PPP1CA, PPP1CB and PPP1CC). Interacts with LZTR1. Interacts with Ras proteins; the interaction is antagonized by RIN1. Weakly interacts with RIT1. Interacts (via N-terminus) with RGS14 (via RBD domains); the interaction mediates the formation of a ternary complex with BRAF, a ternary complex inhibited by GNAI1. Probably forms a complex composed of chaperones HSP90 and HSP70, co-chaperones CDC37, PPP5C, TSC1 and client protein TSC2, CDK4, AKT, RAF1 and NR3C1; this complex does not contain co-chaperones STIP1/HOP and PTGES3/p23. Interacts with STK3/MST2; the interaction inhibits its pro-apoptotic activity. Interacts (when phosphorylated at Ser-259) with YWHAZ (unphosphorylated at 'Thr-232'). Interacts with MAP2K1/MEK1 and MAP2K2/MEK2. Interacts with MAP3K5/ASF1 (via N-terminus) and this interaction inhibits the proapoptotic function of MAP3K5/ASK1. Interacts with PAK1 (via kinase domain). The phosphorylated form interacts with PIN1. The Ser-338 and Ser-339 phosphorylated form (by PAK1) interacts with BCL2. Interacts with PEBP1/RKIP and this interaction is enhanced if RAF1 is phosphorylated on residues Ser-338, Ser-339, Tyr-340 and Tyr-341. Interacts with ADCY2, ADCY5, ADCY6, DGKH, RCAN1/DSCR1, PPP1R12A, PKB/AKT1, PPP2CA, PPP2R1B, SPRY2, SPRY4, CNKSR1/CNK1, KSR2 and PHB/prohibitin. Interacts with ROCK2. In its active form, interacts with PRMT5. Interacts with FAM83B; displaces 14-3-3 proteins from RAF1 and activates RAF1. Interacts with PDE8A; the interaction promotes RAF1 activity. Interacts with MFHAS1. Interacts with GLS. Interacts with NEK10 and MAP2K1; the interaction is direct with NEK10 and required for ERK1/2-signaling pathway activation in response to UV irradiation. Requires Zn(2+) as cofactor. In terms of processing, phosphorylation at Thr-269, Ser-338, Tyr-341, Thr-491 and Ser-494 results in its activation. Phosphorylation at Ser-29, Ser-43, Ser-289, Ser-296, Ser-301 and Ser-642 by MAPK1/ERK2 results in its inactivation. Phosphorylation at Ser-259 induces the interaction with YWHAZ and inactivates kinase activity. Dephosphorylation of Ser-259 by the SHOC2-MRAS-PP1c (SMP) complex consisting of SHOC2, GTP-bound M-Ras/MRAS and the catalytic subunit of protein phosphatase 1 (PPP1CA, PPP1CB or PPP1CC); this relieves inactivation and stimulates kinase activity. Phosphorylation at Ser-338 by PAK1 and PAK5 and Ser-339 by PAK1 is required for its mitochondrial localization. Phosphorylation at Ser-621 in response to growth factor treatment stabilizes the protein, possibly by preventing proteasomal degradation. Phosphorylation at Ser-289, Ser-296, Ser-301, Ser-338 and Ser-621 are somehow linked to the methylation potential of cells. Treatment of cells with HGF in the presence of the methylation inhibitor 5'-methylthioadenosine (MTA) results in increased phosphorylation at Ser-338 and Ser-621 and decreased phosphorylation at Ser-296, Ser-301 and Ser-338. Dephosphorylation at Ser-338 by PPP5C results in an activity decrease. Post-translationally, methylated at Arg-563 in response to EGF treatment. This modification leads to destabilization of the protein, possibly through proteasomal degradation. In terms of tissue distribution, in skeletal muscle, isoform 1 is more abundant than isoform 2.

It is found in the cytoplasm. The protein localises to the cell membrane. Its subcellular location is the mitochondrion. The protein resides in the nucleus. It carries out the reaction L-seryl-[protein] + ATP = O-phospho-L-seryl-[protein] + ADP + H(+). The enzyme catalyses L-threonyl-[protein] + ATP = O-phospho-L-threonyl-[protein] + ADP + H(+). Regulation is a highly complex process involving membrane recruitment, protein-protein interactions, dimerization, and phosphorylation/dephosphorylation events. Ras-GTP recruits RAF1 to the membrane, thereby promoting its activation. The inactive conformation of RAF1 is maintained by autoinhibitory interactions occurring between the N-terminal regulatory and the C-terminal catalytic domains and by the binding of a 14-3-3 protein that contacts two phosphorylation sites, Ser-259 and Ser-621. Upon mitogenic stimulation, Ras and PPP2R1A cooperate to release autoinhibition and the subsequent phosphorylation of activating sites: Ser-338, Tyr-341, Thr-491, and Ser-494, yields a fully active kinase. Through a negative feedback mechanism involving MAPK1/ERK2, RAF1 is phosphorylated on Ser-29, Ser-43, Ser-289, Ser-296, Ser-301 and Ser-642 by MAPK1/ERK2, which yields an inactive, desensitized kinase. The signaling-competent conformation of RAF1 is finally re-established by the coordinated action of PIN1, a prolyl isomerase that converts pSer and pThr residues from the cis to the trans conformation, which is preferentially recognized and dephosphorylated by PPP2R1A. Activated by homodimerization and heterodimerization (with BRAF). Also regulated through association with other proteins such as KSR2, CNKSR1/CNK1, PEBP1/RKIP, PHB/prohibitin and SPRY4. PEBP1/RKIP acts by dissociating RAF1 from its substrates MAP2K1/MEK1 and MAP2K2/MEK2. PHB/prohibitin facilitates the displacement of 14-3-3 from RAF1 by activated Ras, thereby promoting cell membrane localization and phosphorylation of RAF1 at the activating Ser-338. SPRY4 inhibits Ras-independent, but not Ras-dependent, activation of RAF1. CNKSR1/CNK1 regulates Src-mediated RAF1 activation. Its function is as follows. Serine/threonine-protein kinase that acts as a regulatory link between the membrane-associated Ras GTPases and the MAPK/ERK cascade, and this critical regulatory link functions as a switch determining cell fate decisions including proliferation, differentiation, apoptosis, survival and oncogenic transformation. RAF1 activation initiates a mitogen-activated protein kinase (MAPK) cascade that comprises a sequential phosphorylation of the dual-specific MAPK kinases (MAP2K1/MEK1 and MAP2K2/MEK2) and the extracellular signal-regulated kinases (MAPK3/ERK1 and MAPK1/ERK2). The phosphorylated form of RAF1 (on residues Ser-338 and Ser-339, by PAK1) phosphorylates BAD/Bcl2-antagonist of cell death at 'Ser-75'. Phosphorylates adenylyl cyclases: ADCY2, ADCY5 and ADCY6, resulting in their activation. Phosphorylates PPP1R12A resulting in inhibition of the phosphatase activity. Phosphorylates TNNT2/cardiac muscle troponin T. Can promote NF-kB activation and inhibit signal transducers involved in motility (ROCK2), apoptosis (MAP3K5/ASK1 and STK3/MST2), proliferation and angiogenesis (RB1). Can protect cells from apoptosis also by translocating to the mitochondria where it binds BCL2 and displaces BAD/Bcl2-antagonist of cell death. Regulates Rho signaling and migration, and is required for normal wound healing. Plays a role in the oncogenic transformation of epithelial cells via repression of the TJ protein, occludin (OCLN) by inducing the up-regulation of a transcriptional repressor SNAI2/SLUG, which induces down-regulation of OCLN. Restricts caspase activation in response to selected stimuli, notably Fas stimulation, pathogen-mediated macrophage apoptosis, and erythroid differentiation. This chain is RAF proto-oncogene serine/threonine-protein kinase, found in Homo sapiens (Human).